A 151-amino-acid polypeptide reads, in one-letter code: Flavodoxin YqcA (151 aa).

The Flavodoxin-like domain maps to I4–A145. FMN is bound by residues T10–A15 and N99–C101.

Belongs to the flavodoxin family. MioC subfamily. Monomer. FMN is required as a cofactor.

Functionally, probable electron transporter. The sequence is that of Flavodoxin YqcA from Pectobacterium carotovorum subsp. carotovorum (Erwinia carotovora subsp. carotovora).